The chain runs to 72 residues: Translation initiation factor IF-1 1 (72 aa).

One can recognise an S1-like domain in the interval 1 to 72 (MAKDDVIQMQ…SRARIVFRAK (72 aa)).

It belongs to the IF-1 family. Component of the 30S ribosomal translation pre-initiation complex which assembles on the 30S ribosome in the order IF-2 and IF-3, IF-1 and N-formylmethionyl-tRNA(fMet); mRNA recruitment can occur at any time during PIC assembly.

The protein resides in the cytoplasm. Its function is as follows. One of the essential components for the initiation of protein synthesis. Stabilizes the binding of IF-2 and IF-3 on the 30S subunit to which N-formylmethionyl-tRNA(fMet) subsequently binds. Helps modulate mRNA selection, yielding the 30S pre-initiation complex (PIC). Upon addition of the 50S ribosomal subunit IF-1, IF-2 and IF-3 are released leaving the mature 70S translation initiation complex. The chain is Translation initiation factor IF-1 1 from Ralstonia nicotianae (strain ATCC BAA-1114 / GMI1000) (Ralstonia solanacearum).